The following is a 637-amino-acid chain: Protein arginine N-methyltransferase 5 (637 aa).

Ala2 bears the N-acetylalanine mark. Positions 13 to 292 are TIM barrel; the sequence is RVSSGRDLNC…YLEYLSQNRP (280 aa). The SAM-dependent MTase PRMT-type domain occupies 308–615; it reads LQSPLQPLMD…SNSKKVWYEW (308 aa). Residue Tyr324 participates in S-adenosyl-L-methionine binding. A protein is bound at residue Phe327. S-adenosyl-L-methionine contacts are provided by residues 333 to 334, Glu392, and 419 to 420; these read KY and DM. 2 residues coordinate a protein: Glu435 and Glu444. Residues Glu435 and Glu444 each act as proton donor/acceptor in the active site. Residues 465 to 637 form a beta barrel region; that stretch reads PGEYTSFLAP…PTGRSYTIGL (173 aa). The tract at residues 488-494 is dimerization; sequence REKDRDP.

Belongs to the class I-like SAM-binding methyltransferase superfamily. Protein arginine N-methyltransferase family. As to quaternary structure, forms, at least, homodimers and homotetramers. Component of the methylosome complex, composed of PRMT5, WDR77 and CLNS1A. Found in a complex composed of PRMT5, WDR77 and RIOK1. RIOK1 and CLNS1A associate with PRMT5 in a mutually exclusive fashion, which allows the recruitment of distinct methylation substrates, such as nucleolin/NCL and Sm proteins, respectively. Interacts with PRDM1. Identified in a complex composed of methylosome and PRMT1 and ERH. Interacts with EGFR; methylates EGFR and stimulates EGFR-mediated ERK activation. Interacts with HOXA9. Interacts with SRGAP2. Found in a complex with COPRS, RUNX1 and CBFB. Interacts with CHTOP; the interaction symmetrically methylates CHTOP, but seems to require the presence of PRMT1. Interacts with EPB41L3; this modulates methylation of target proteins. Component of a high molecular weight E2F-pocket protein complex, CERC (cyclin E1 repressor complex). Associates with SWI/SNF remodeling complexes containing SMARCA2 and SMARCA4. Interacts with JAK2, SSTR1, SUPT5H, BRAF and with active RAF1. Interacts with LSM11, PRMT7 and SNRPD3. Interacts with COPRS; promoting its recruitment on histone H4. Interacts with CLNS1A/pICln. Identified in a complex with CLNS1A/pICln and Sm proteins. Interacts with RPS10. Interacts with WDR77. Interacts with IWS1. Interacts with CRY1. Interacts with POLR2A. Interacts with SMN1/SMN2. Interacts with LYAR; this interaction is direct. Interacts with TTC5/STRAP; this interaction is DNA damage-dependent and promotes PRMT5 interaction with p53/TP53. Interacts with p53/TP53 in response to DNA damage; the interaction is TTC5/STRAP dependent. Interacts with FAM47E; the interaction is direct, promotes PRMT5 localization to chromatin, and does not disrupt its association with WDR77 or STUB1. Interacts with TDRD6. Interacts with STUB1. Interacts with MBD2. Does not interact with MBD3.

Its subcellular location is the cytoplasm. It localises to the nucleus. It is found in the golgi apparatus. It catalyses the reaction L-arginyl-[protein] + 2 S-adenosyl-L-methionine = N(omega),N(omega)'-dimethyl-L-arginyl-[protein] + 2 S-adenosyl-L-homocysteine + 2 H(+). Its activity is regulated as follows. Activity is increased by EGF, HGF, FGF1 or FGF2 treatments, and slightly decreased by NGF treatment. Its function is as follows. Arginine methyltransferase that can both catalyze the formation of omega-N monomethylarginine (MMA) and symmetrical dimethylarginine (sDMA), with a preference for the formation of MMA. Specifically mediates the symmetrical dimethylation of arginine residues in the small nuclear ribonucleoproteins Sm D1 (SNRPD1) and Sm D3 (SNRPD3); such methylation being required for the assembly and biogenesis of snRNP core particles. Methylates SUPT5H and may regulate its transcriptional elongation properties. May methylate the N-terminal region of MBD2. Mono- and dimethylates arginine residues of myelin basic protein (MBP) in vitro. May play a role in cytokine-activated transduction pathways. Negatively regulates cyclin E1 promoter activity and cellular proliferation. Methylates histone H2A and H4 'Arg-3' during germ cell development. Methylates histone H3 'Arg-8', which may repress transcription. Methylates the Piwi proteins (PIWIL1, PIWIL2 and PIWIL4), methylation of Piwi proteins being required for the interaction with Tudor domain-containing proteins and subsequent localization to the meiotic nuage. Methylates RPS10. Attenuates EGF signaling through the MAPK1/MAPK3 pathway acting at 2 levels. First, monomethylates EGFR; this enhances EGFR 'Tyr-1197' phosphorylation and PTPN6 recruitment, eventually leading to reduced SOS1 phosphorylation. Second, methylates RAF1 and probably BRAF, hence destabilizing these 2 signaling proteins and reducing their catalytic activity. Required for induction of E-selectin and VCAM-1, on the endothelial cells surface at sites of inflammation. Methylates HOXA9. Methylates and regulates SRGAP2 which is involved in cell migration and differentiation. Acts as a transcriptional corepressor in CRY1-mediated repression of the core circadian component PER1 by regulating the H4R3 dimethylation at the PER1 promoter. Methylates GM130/GOLGA2, regulating Golgi ribbon formation. Methylates H4R3 in genes involved in glioblastomagenesis in a CHTOP- and/or TET1-dependent manner. Symmetrically methylates POLR2A, a modification that allows the recruitment to POLR2A of proteins including SMN1/SMN2 and SETX. This is required for resolving RNA-DNA hybrids created by RNA polymerase II, that form R-loop in transcription terminal regions, an important step in proper transcription termination. Along with LYAR, binds the promoter of gamma-globin HBG1/HBG2 and represses its expression. Symmetrically methylates NCL. Methylates p53/TP53; methylation might possibly affect p53/TP53 target gene specificity. Involved in spliceosome maturation and mRNA splicing in prophase I spermatocytes through the catalysis of the symmetrical arginine dimethylation of SNRPB (small nuclear ribonucleoprotein-associated protein) and the interaction with tudor domain-containing protein TDRD6. This is Protein arginine N-methyltransferase 5 (Prmt5) from Mus musculus (Mouse).